The following is a 460-amino-acid chain: Proton extrusion protein PxcA (460 aa).

2 disordered regions span residues 82 to 128 (FSRL…QRRD) and 143 to 190 (SRYK…GSGN). A compositionally biased stretch (polar residues) spans 90-102 (QNGSGPTSAQDKA). Over residues 107 to 120 (AAEANVSESSSENS) the composition is skewed to low complexity. The span at 151–163 (KSQPISASISTSP) shows a compositional bias: polar residues. Positions 171–184 (QPTSTQPSSSNVSV) are enriched in low complexity. 4 helical membrane passes run 242–262 (FLLL…NFLF), 337–357 (GLKN…LIFV), 373–393 (IYGL…DVFV), and 420–440 (FIYG…KYWI).

It belongs to the CemA family.

Its subcellular location is the cell inner membrane. Functionally, required for H(+) efflux immediately after light irradiation to form a rapid H(+) concentration gradient across the thylakoid membranes. Together with PxcL, contributes to transient H(+) uptake following dark to light transition. The polypeptide is Proton extrusion protein PxcA (Synechococcus sp. (strain JA-2-3B'a(2-13)) (Cyanobacteria bacterium Yellowstone B-Prime)).